The primary structure comprises 121 residues: Small ribosomal subunit protein uS13 (121 aa).

The disordered stretch occupies residues 94 to 121 (GLPMRGQRTRTNARTRKGPRKAAAALKK).

This sequence belongs to the universal ribosomal protein uS13 family. As to quaternary structure, part of the 30S ribosomal subunit. Forms a loose heterodimer with protein S19. Forms two bridges to the 50S subunit in the 70S ribosome.

Located at the top of the head of the 30S subunit, it contacts several helices of the 16S rRNA. In the 70S ribosome it contacts the 23S rRNA (bridge B1a) and protein L5 of the 50S subunit (bridge B1b), connecting the 2 subunits; these bridges are implicated in subunit movement. Contacts the tRNAs in the A and P-sites. The chain is Small ribosomal subunit protein uS13 from Polaromonas sp. (strain JS666 / ATCC BAA-500).